The primary structure comprises 719 residues: MSKIRVYQLAKKLGISNKELIDKLKELSIEVNSHMSTVDNENADVLIELFTEQNKEETKPNVDEKPPNQDTLTDNVNESAESIQNVDKKHFKKEINSTKNVTPNGNNKKDKKKKNKKDKRKNYIANNDVSAESKGEQVIQLKNKLTVKELSETLNKSASEIITKLIGLGIMATINQELDYDTASIIAAEFGIEVEPMTDIDAEEDVFDIIIEPDKPEDLKHRSPVVTVMGHVDHGKTSLLDAIRKTKVTNSEAGGITQHIGASEIKVNDKKIVFLDTPGHEAFTSMRARGAKVTDVAILVVAADDGVMPQTIEAISHAKAAEVPIIVAINKMDKPSANPDRVKQELADQGLLIEEWGGDVISVPVSARSGENIDALLEMVLLVSEMSELKANPNRKAIGTVIEAQLDVGKGPVATVLVQNGTLFIGDSVVIGNTYGRIRAMMNDSGKRVKVAGPSTAVEITGLSEVPEAGDQLFAVDDDKAAKAIVEKRINKIKEEQLKAGQKISLDALFSQMEQGQLKDLNLIIKADTQGSVEAVKQSLVKLSNDEVVINPIHGGVGGITESDVMLATASNAIIIGFNVRPTSNAASAAKKENVDIRTYRIIYKAIEDIEAAMKGMLDPEFVEEELGKAEVRATFKVPGAGTIGGCYVIEGKILRNAKIRLVRDNIVIHEGSIDSLKRFKDDAKEVATGYECGIGISQFNDLKEGDIIEAYHMKEIER.

The segment covering 54–67 (NKEETKPNVDEKPP) has biased composition (basic and acidic residues). Disordered stretches follow at residues 54 to 75 (NKEE…LTDN) and 97 to 122 (STKN…KRKN). Residues 109 to 122 (KDKKKKNKKDKRKN) show a composition bias toward basic residues. The tr-type G domain occupies 221–390 (HRSPVVTVMG…LLVSEMSELK (170 aa)). The segment at 230 to 237 (GHVDHGKT) is G1. A GTP-binding site is contributed by 230-237 (GHVDHGKT). The segment at 255-259 (GITQH) is G2. Residues 276–279 (DTPG) are G3. Residues 276-280 (DTPGH) and 330-333 (NKMD) contribute to the GTP site. Residues 330–333 (NKMD) are G4. The segment at 366-368 (SAR) is G5.

Belongs to the TRAFAC class translation factor GTPase superfamily. Classic translation factor GTPase family. IF-2 subfamily.

Its subcellular location is the cytoplasm. Its function is as follows. One of the essential components for the initiation of protein synthesis. Protects formylmethionyl-tRNA from spontaneous hydrolysis and promotes its binding to the 30S ribosomal subunits. Also involved in the hydrolysis of GTP during the formation of the 70S ribosomal complex. The protein is Translation initiation factor IF-2 of Alkaliphilus oremlandii (strain OhILAs) (Clostridium oremlandii (strain OhILAs)).